The sequence spans 179 residues: Nicotinamide-nucleotide adenylyltransferase (179 aa).

It belongs to the archaeal NMN adenylyltransferase family.

It is found in the cytoplasm. The enzyme catalyses beta-nicotinamide D-ribonucleotide + ATP + H(+) = diphosphate + NAD(+). It functions in the pathway cofactor biosynthesis; NAD(+) biosynthesis; NAD(+) from nicotinamide D-ribonucleotide: step 1/1. The protein is Nicotinamide-nucleotide adenylyltransferase of Thermoplasma acidophilum (strain ATCC 25905 / DSM 1728 / JCM 9062 / NBRC 15155 / AMRC-C165).